Consider the following 543-residue polypeptide: Bifunctional purine biosynthesis protein PurH (543 aa).

One can recognise an MGS-like domain in the interval 5-151 (NHARPIRRAL…KNHKDVTIVV (147 aa)).

The protein belongs to the PurH family.

It catalyses the reaction (6R)-10-formyltetrahydrofolate + 5-amino-1-(5-phospho-beta-D-ribosyl)imidazole-4-carboxamide = 5-formamido-1-(5-phospho-D-ribosyl)imidazole-4-carboxamide + (6S)-5,6,7,8-tetrahydrofolate. The enzyme catalyses IMP + H2O = 5-formamido-1-(5-phospho-D-ribosyl)imidazole-4-carboxamide. It functions in the pathway purine metabolism; IMP biosynthesis via de novo pathway; 5-formamido-1-(5-phospho-D-ribosyl)imidazole-4-carboxamide from 5-amino-1-(5-phospho-D-ribosyl)imidazole-4-carboxamide (10-formyl THF route): step 1/1. Its pathway is purine metabolism; IMP biosynthesis via de novo pathway; IMP from 5-formamido-1-(5-phospho-D-ribosyl)imidazole-4-carboxamide: step 1/1. In Shewanella oneidensis (strain ATCC 700550 / JCM 31522 / CIP 106686 / LMG 19005 / NCIMB 14063 / MR-1), this protein is Bifunctional purine biosynthesis protein PurH.